Reading from the N-terminus, the 158-residue chain is Flagellar assembly factor FliW (158 aa).

The protein belongs to the FliW family. In terms of assembly, interacts with translational regulator CsrA and flagellin(s).

It localises to the cytoplasm. Acts as an anti-CsrA protein, binds CsrA and prevents it from repressing translation of its target genes, one of which is flagellin. Binds to flagellin and participates in the assembly of the flagellum. This chain is Flagellar assembly factor FliW, found in Syntrophus aciditrophicus (strain SB).